Consider the following 515-residue polypeptide: Maturase K (515 aa).

It belongs to the intron maturase 2 family. MatK subfamily.

The protein localises to the plastid. Its subcellular location is the chloroplast. In terms of biological role, usually encoded in the trnK tRNA gene intron. Probably assists in splicing its own and other chloroplast group II introns. This chain is Maturase K, found in Pseudotsuga menziesii (Douglas-fir).